We begin with the raw amino-acid sequence, 215 residues long: Protein GET1 (215 aa).

The Lumenal portion of the chain corresponds to 1 to 4; sequence MPSL. Residues 5 to 24 form a helical membrane-spanning segment; the sequence is LILIFTIEVAVELINTIGAA. Topologically, residues 25–110 are cytoplasmic; sequence TINNLLWRIF…NFDKYITGIR (86 aa). Residues 72–104 are a coiled coil; sequence AKWAKLRRQHDKLLEQLEKKKAALDSTKGNFDK. Residues 111 to 131 form a helical membrane-spanning segment; sequence WVGTQGLRYFLPFWYAKVPMF. The Lumenal segment spans residues 132–155; that stretch reads WLPYGWFPYYAEWLVSFPRAPMGS. The helical transmembrane segment at 156–172 threads the bilayer; sequence VSIASWQLACTGFVVLI. At 173-215 the chain is on the cytoplasmic side; that stretch reads KDAITALVVFVMGMRQSNVKQAVPVKAVSGEKASDEKEGKKEL.

Belongs to the WRB/GET1 family. As to quaternary structure, interacts with GET3.

It localises to the endoplasmic reticulum membrane. In terms of biological role, required for the post-translational delivery of tail-anchored (TA) proteins to the endoplasmic reticulum. Acts as a membrane receptor for soluble GET3, which recognizes and selectively binds the transmembrane domain of TA proteins in the cytosol. The chain is Protein GET1 from Pyricularia oryzae (strain 70-15 / ATCC MYA-4617 / FGSC 8958) (Rice blast fungus).